Consider the following 426-residue polypeptide: uncharacterized protein (426 aa).

A Zn(2+)-binding site is contributed by His-277. Glu-278 is an active-site residue. Residues His-281 and Glu-357 each coordinate Zn(2+).

The protein belongs to the peptidase M48B family. It depends on Zn(2+) as a cofactor.

This is an uncharacterized protein from Bacillus subtilis (strain 168).